The chain runs to 185 residues: Iodate reductase subunit IdrB (185 aa).

The segment at residues 1–46 (MTTHPIHLHHDDPAHGGERACMSRRSFLLAGGAMVTLASLPGTAVA) is a signal peptide (tat-type signal). Positions 69 to 168 (GEPLEFAYPY…LEVRGDDIYA (100 aa)) constitute a Rieske domain. Residues Cys-109, His-111, Cys-130, and His-133 each contribute to the [2Fe-2S] cluster site.

Belongs to the AOX family. As to quaternary structure, the iodate reductase (Idr) complex is composed of a molybdopterin-dependent iodate reductase (IdrA and IdrB subunits) and two associated peroxidases (IdrP1 and IdrP2). Requires [2Fe-2S] cluster as cofactor. Post-translationally, predicted to be exported by the Tat system. The position of the signal peptide cleavage has not been experimentally proven.

It is found in the periplasm. Functionally, involved in iodate respiration. May accept electrons from cytochrome c551, and catalyze the reduction of iodate (IO(3)(-)) to produce the chemically unstable intermediate hypoiodous acid (HIO). This intermediate then undergoes abiotic disproportionation to yield two molecules of iodide (I(-)) and one molecule of iodate. The resultant iodate subsequently cycles back into the reductive pathway. The initial reduction of iodate may inadvertently produce low levels of incidental toxic H(2)O(2), which is detoxified by IdrP1 and IdrP2. The chain is Iodate reductase subunit IdrB from Denitromonas iodatirespirans.